A 496-amino-acid polypeptide reads, in one-letter code: Alanine aminotransferase 1 (496 aa).

The residue at position 2 (alanine 2) is an N-acetylalanine. Threonine 22 carries the post-translational modification Phosphothreonine. Lysine 314 carries the post-translational modification N6-(pyridoxal phosphate)lysine.

The protein belongs to the class-I pyridoxal-phosphate-dependent aminotransferase family. Alanine aminotransferase subfamily. In terms of assembly, homodimer. Requires pyridoxal 5'-phosphate as cofactor. As to expression, mainly expressed in liver, intestine, colon and white adipose tissue.

The protein resides in the cytoplasm. The catalysed reaction is L-alanine + 2-oxoglutarate = pyruvate + L-glutamate. It participates in amino-acid degradation; L-alanine degradation via transaminase pathway; pyruvate from L-alanine: step 1/1. Catalyzes the reversible transamination between alanine and 2-oxoglutarate to form pyruvate and glutamate. Participates in cellular nitrogen metabolism and also in liver gluconeogenesis starting with precursors transported from skeletal muscles. In Mus musculus (Mouse), this protein is Alanine aminotransferase 1 (Gpt).